A 143-amino-acid polypeptide reads, in one-letter code: Large ribosomal subunit protein uL11 (143 aa).

The protein belongs to the universal ribosomal protein uL11 family. Part of the ribosomal stalk of the 50S ribosomal subunit. Interacts with L10 and the large rRNA to form the base of the stalk. L10 forms an elongated spine to which L12 dimers bind in a sequential fashion forming a multimeric L10(L12)X complex. Post-translationally, one or more lysine residues are methylated.

In terms of biological role, forms part of the ribosomal stalk which helps the ribosome interact with GTP-bound translation factors. This is Large ribosomal subunit protein uL11 from Paenarthrobacter aurescens (strain TC1).